Here is a 203-residue protein sequence, read N- to C-terminus: MNPEYDYLFKLLLIGDSGVGKSCLLLRFADDTYTESYISTIGVDFKIRTIELDGKTVKLQIWDTAGQERFRTITSSYYRGAHGICVVYDVTDMDSFNNVKQWLQEIDRYATEGVNKLLVGNKSDMTDKKVVEYTVAKEFADSLGIPFLETSAKNASNVEQAFLTMARQIKERMGSSIATNNTKASVNVSPGHGVSNNSSGGCC.

GTP is bound by residues 15-23, 33-40, 63-67, 121-124, and 151-153; these read GDSGVGKSC, YTESYIST, DTAGQ, NKSD, and SAK. An Effector region motif is present at residues 37-45; the sequence is YISTIGVDF. Positions 180–203 are disordered; it reads NNTKASVNVSPGHGVSNNSSGGCC. 2 S-geranylgeranyl cysteine lipidation sites follow: cysteine 202 and cysteine 203.

It belongs to the small GTPase superfamily. Rab family.

It is found in the endoplasmic reticulum membrane. The protein resides in the golgi apparatus membrane. The protein localises to the cytoplasm. It localises to the preautophagosomal structure membrane. With respect to regulation, rab activation is generally mediated by a guanine exchange factor (GEF), while inactivation through hydrolysis of bound GTP is catalyzed by a GTPase activating protein (GAP). The small GTPases Rab are key regulators of intracellular membrane trafficking, from the formation of transport vesicles to their fusion with membranes. Rabs cycle between an inactive GDP-bound form and an active GTP-bound form that is able to recruit to membranes different set of downstream effectors directly responsible for vesicle formation, movement, tethering and fusion. Ypt-1 regulates the trafficking of secretory vesicles from the endoplasmic reticulum (ER) to the Golgi. Plays a role in the initial events of the autophagic vacuole development which take place at specialized regions of the endoplasmic reticulum. Also involved in the recycling of membrane proteins. The protein is GTP-binding protein ypt1 (ypt-1) of Neurospora crassa (strain ATCC 24698 / 74-OR23-1A / CBS 708.71 / DSM 1257 / FGSC 987).